The following is a 142-amino-acid chain: Small heat shock protein IbpB (142 aa).

The sHSP domain maps to 26 to 137 (TAEHQAFPPY…APQRIAISDR (112 aa)).

It belongs to the small heat shock protein (HSP20) family. In terms of assembly, homodimer. Forms homomultimers of about 100-150 subunits at optimal growth temperatures. Conformation changes to oligomers at high temperatures or high ionic concentrations. The decrease in size of the multimers is accompanied by an increase in chaperone activity.

It localises to the cytoplasm. Functionally, associates with aggregated proteins, together with IbpA, to stabilize and protect them from irreversible denaturation and extensive proteolysis during heat shock and oxidative stress. Aggregated proteins bound to the IbpAB complex are more efficiently refolded and reactivated by the ATP-dependent chaperone systems ClpB and DnaK/DnaJ/GrpE. Its activity is ATP-independent. This is Small heat shock protein IbpB from Enterobacter sp. (strain 638).